A 400-amino-acid polypeptide reads, in one-letter code: NADPH dehydrogenase 1 (400 aa).

Residues T38 and Q115 each contribute to the FMN site. Substrate-binding residues include H192 and N195. Y197 (proton donor) is an active-site residue. Residues R244 and R349 each contribute to the FMN site. Y376 lines the substrate pocket.

As to quaternary structure, homodimer or heterodimer. FMN is required as a cofactor.

The catalysed reaction is A + NADPH + H(+) = AH2 + NADP(+). Flavin-dependent enoate reductase that catalyzes the chemo- and stereoslective hydrogenation of electron-poor alkenes. The enzyme is reduced by NADPH, and oxygen, quinones, and alpha,beta-unsaturated aldehydes and ketones can act as electron acceptors to complete catalytic turnover. The physiological oxidant remains elusive. The chain is NADPH dehydrogenase 1 from Saccharomyces pastorianus (Lager yeast).